We begin with the raw amino-acid sequence, 305 residues long: Aurora/IPL1-related protein kinase 2 (305 aa).

A Protein kinase domain is found at 30-280 (FEIGRPLGKG…LEQVKEHYWI (251 aa)). ATP contacts are provided by residues 36 to 44 (LGKGKFGSV) and K59. The Proton acceptor role is filled by D153.

Belongs to the protein kinase superfamily. Ser/Thr protein kinase family. Aurora subfamily. In terms of assembly, component of the CPC complex which consists of icp-1; csc-1; bir-1 and air-2. Within the complex, interacts with icp-1; csc-1 and bir-1. Interacts with zen-4. Interacts with tlk-1 and bmk-1. Post-translationally, phosphorylated. Increased phosphorylation upon chromatin obstructions at anaphase.

The protein localises to the cytoplasm. Its subcellular location is the cytoskeleton. It is found in the chromosome. It localises to the midbody. The protein resides in the spindle. The enzyme catalyses L-seryl-[protein] + ATP = O-phospho-L-seryl-[protein] + ADP + H(+). It carries out the reaction L-threonyl-[protein] + ATP = O-phospho-L-threonyl-[protein] + ADP + H(+). Its function is as follows. Serine/threonine-protein kinase component of the chromosomal passenger complex (CPC), a complex that acts as a key regulator of chromosome segregation and cytokinesis. The CPC complex has essential functions at the centromere in ensuring correct chromosome alignment and segregation. Required for histone H3 phosphorylation during segregation of homologous chromosomes in meiosis and mitosis. Required for histone H3 'Ser-10' phosphorylation. Phosphorylates tlk-1 at 'Ser-634', which enhances its activity. Phosphorylates zen-4 at 'Ser-680'. Required for the recruitment of bub-1 to the ring-shaped domain between chromosomes during meiotic anaphase I. Also required for the localization of the condensin I complex subunit smc-4 to mitotic chromosomes. Acts at the spindle midzone and the midbody to prevent cleavage furrow regression upon chromatin obstructions during cytokinesis. This Caenorhabditis elegans protein is Aurora/IPL1-related protein kinase 2.